The following is a 152-amino-acid chain: SsrA-binding protein (152 aa).

The span at Arg-132–Asp-142 shows a compositional bias: basic and acidic residues. The disordered stretch occupies residues Arg-132–Arg-152.

It belongs to the SmpB family.

It is found in the cytoplasm. Required for rescue of stalled ribosomes mediated by trans-translation. Binds to transfer-messenger RNA (tmRNA), required for stable association of tmRNA with ribosomes. tmRNA and SmpB together mimic tRNA shape, replacing the anticodon stem-loop with SmpB. tmRNA is encoded by the ssrA gene; the 2 termini fold to resemble tRNA(Ala) and it encodes a 'tag peptide', a short internal open reading frame. During trans-translation Ala-aminoacylated tmRNA acts like a tRNA, entering the A-site of stalled ribosomes, displacing the stalled mRNA. The ribosome then switches to translate the ORF on the tmRNA; the nascent peptide is terminated with the 'tag peptide' encoded by the tmRNA and targeted for degradation. The ribosome is freed to recommence translation, which seems to be the essential function of trans-translation. The sequence is that of SsrA-binding protein from Bdellovibrio bacteriovorus (strain ATCC 15356 / DSM 50701 / NCIMB 9529 / HD100).